The sequence spans 291 residues: 4-hydroxy-tetrahydrodipicolinate synthase (291 aa).

T45 serves as a coordination point for pyruvate. Y133 functions as the Proton donor/acceptor in the catalytic mechanism. K161 functions as the Schiff-base intermediate with substrate in the catalytic mechanism. I203 provides a ligand contact to pyruvate.

The protein belongs to the DapA family. In terms of assembly, homotetramer; dimer of dimers.

The protein localises to the cytoplasm. The catalysed reaction is L-aspartate 4-semialdehyde + pyruvate = (2S,4S)-4-hydroxy-2,3,4,5-tetrahydrodipicolinate + H2O + H(+). Its pathway is amino-acid biosynthesis; L-lysine biosynthesis via DAP pathway; (S)-tetrahydrodipicolinate from L-aspartate: step 3/4. In terms of biological role, catalyzes the condensation of (S)-aspartate-beta-semialdehyde [(S)-ASA] and pyruvate to 4-hydroxy-tetrahydrodipicolinate (HTPA). In Methylococcus capsulatus (strain ATCC 33009 / NCIMB 11132 / Bath), this protein is 4-hydroxy-tetrahydrodipicolinate synthase.